A 148-amino-acid chain; its full sequence is Cysteine-rich venom protein VAR6 (148 aa).

Residues M1–S22 form the signal peptide. Residues N41–Q140 enclose the SCP domain.

This sequence belongs to the CRISP family. Post-translationally, contains 8 disulfide bonds. In terms of tissue distribution, expressed by the venom gland.

Its subcellular location is the secreted. In terms of biological role, blocks ryanodine receptors, and potassium channels. The chain is Cysteine-rich venom protein VAR6 from Varanus acanthurus (Ridge-tailed monitor).